We begin with the raw amino-acid sequence, 520 residues long: GMP synthase [glutamine-hydrolyzing] (520 aa).

The region spanning K12–D205 is the Glutamine amidotransferase type-1 domain. C89 acts as the Nucleophile in catalysis. Residues H179 and E181 contribute to the active site. Positions W206 to R395 constitute a GMPS ATP-PPase domain. S233–S239 contacts ATP.

As to quaternary structure, homodimer.

The catalysed reaction is XMP + L-glutamine + ATP + H2O = GMP + L-glutamate + AMP + diphosphate + 2 H(+). It functions in the pathway purine metabolism; GMP biosynthesis; GMP from XMP (L-Gln route): step 1/1. Functionally, catalyzes the synthesis of GMP from XMP. The sequence is that of GMP synthase [glutamine-hydrolyzing] from Streptococcus pyogenes serotype M1.